The primary structure comprises 375 residues: 4-hydroxy-3-methylbut-2-en-1-yl diphosphate synthase (flavodoxin) (375 aa).

Positions 270, 273, 305, and 312 each coordinate [4Fe-4S] cluster.

It belongs to the IspG family. [4Fe-4S] cluster serves as cofactor.

The catalysed reaction is (2E)-4-hydroxy-3-methylbut-2-enyl diphosphate + oxidized [flavodoxin] + H2O + 2 H(+) = 2-C-methyl-D-erythritol 2,4-cyclic diphosphate + reduced [flavodoxin]. The protein operates within isoprenoid biosynthesis; isopentenyl diphosphate biosynthesis via DXP pathway; isopentenyl diphosphate from 1-deoxy-D-xylulose 5-phosphate: step 5/6. Converts 2C-methyl-D-erythritol 2,4-cyclodiphosphate (ME-2,4cPP) into 1-hydroxy-2-methyl-2-(E)-butenyl 4-diphosphate. In Shigella flexneri serotype 5b (strain 8401), this protein is 4-hydroxy-3-methylbut-2-en-1-yl diphosphate synthase (flavodoxin).